Reading from the N-terminus, the 590-residue chain is Cationic amino acid transporter 8, vacuolar (590 aa).

At 1-85 (MIPASMEEAH…ESENPMRRCL (85 aa)) the chain is on the cytoplasmic side. Residues 86 to 106 (TWWDLLWLSFGSVVGSGVFVI) form a helical membrane-spanning segment. Residues 107–114 (TGQEARVG) lie on the Vacuolar side of the membrane. A helical membrane pass occupies residues 115 to 135 (AGPAVVLSYAISGVSALLSVL). At 136–160 (CYAEFGVEIPVAGGSFSYLRVELGD) the chain is on the cytoplasmic side. A helical transmembrane segment spans residues 161 to 181 (FIAFIAAGNILLEAMVGAAGL). Over 182–209 (GRSWSSYLASLVKNDSDYFRIKVDSFAK) the chain is Vacuolar. N-linked (GlcNAc...) asparagine glycosylation occurs at Asn195. A helical transmembrane segment spans residues 210-230 (GFDLLDPVAVAVLLVANGIAM). Residues 231–238 (TGTKRTSW) are Cytoplasmic-facing. Residues 239–259 (LNLITSMVTVCIIVFIVVVGF) form a helical membrane-spanning segment. Residues 260–266 (THSKTSN) are Vacuolar-facing. A helical transmembrane segment spans residues 267-287 (LVPFFPYGAKGVVQSAAVVYW). At 288 to 310 (SYTGFDMVANMAEETEKPSRDIP) the chain is on the cytoplasmic side. The helical transmembrane segment at 311 to 331 (IGLVGSMSMITVVYCLMALAL) threads the bilayer. At 332 to 359 (TMMVKYTEIDANAAYSVAFAQIGMKWAK) the chain is on the vacuolar side. A helical membrane pass occupies residues 360–380 (YLVGICALKGMTTSLLVGSLG). Topologically, residues 381–407 (QARYTTQIARSHMIPPWFALVHPKTGT) are cytoplasmic. The chain crosses the membrane as a helical span at residues 408 to 428 (PIYATLLVTILSSIISFFTSL). Residue Glu429 is a topological domain, vacuolar. Residues 430-450 (VLSSVFSFATLFIFMLVAVAL) form a helical membrane-spanning segment. The Cytoplasmic segment spans residues 451-465 (LVRRYYVKDVTPEAG). The chain crosses the membrane as a helical span at residues 466–486 (LLKFLGFLFLIIASSIGVSAL). The Vacuolar segment spans residues 487–493 (WNSGVKG). A helical membrane pass occupies residues 494 to 514 (WIAYTVTGVIWFIGTLGLALL). Over 515–522 (PKYRVPKV) the chain is Cytoplasmic. The helical transmembrane segment at 523–543 (WGVPLVPWLPSFSIAMNLFLI) threads the bilayer. The Vacuolar portion of the chain corresponds to 544–553 (GSLGYVAFLR). The helical transmembrane segment at 554-574 (FIICTMVMLLYYLFVGLHATY) threads the bilayer. Residues 575–590 (DVAHQPLEEAKFEGER) lie on the Cytoplasmic side of the membrane.

The protein belongs to the amino acid-polyamine-organocation (APC) superfamily. Cationic amino acid transporter (CAT) (TC 2.A.3.3) family. In terms of tissue distribution, expressed in roots, stems, flowers and leaves. Mostly present in young and rapidly dividing tissues such as the shoot and root apical meristem, and in young leaves and petioles during seedling development.

It localises to the cell membrane. Functionally, permease involved in the transport of the cationic neutral or acidic amino acids. This chain is Cationic amino acid transporter 8, vacuolar (CAT8), found in Arabidopsis thaliana (Mouse-ear cress).